Consider the following 153-residue polypeptide: ORM1-like protein 2 (153 aa).

Over 1–21 (MNVGVAHSEVNPNTRVMNSRG) the chain is Cytoplasmic. 2 consecutive transmembrane segments (helical) span residues 22–42 (IWLAYIILVGLLHMVLLSIPF) and 43–63 (FSIPVVWTLTNVIHNLATYVF). The Cytoplasmic portion of the chain corresponds to 64-105 (LHTVKGTPFETPDQGKARLLTHWEQMDYGLQFTSSRKFLSIS). Residues 106–126 (PIVLYLLASFYTKYDAAHFLI) traverse the membrane as a helical segment. Residues 127–153 (NTASLLSVLLPKLPQFHGVRVFGINKY) lie on the Extracellular side of the membrane.

Belongs to the ORM family. As to quaternary structure, ceramide-sensitive subunit of the serine palmitoyltransferase (SPT) complex, which is also composed of SPTLC1, SPTLC2/3 and SPTSSA/B. Widely expressed. Expressed in adult and fetal heart, brain, lung, liver, skeletal muscle and kidney. Expressed in adult pancreas and placenta and in fetal spleen abd thymus.

The protein resides in the endoplasmic reticulum membrane. Functionally, plays an essential role in the homeostatic regulation of sphingolipid de novo biosynthesis by modulating the activity of the serine palmitoyltransferase (SPT) in response to ceramide levels. When complexed to SPT, the binding of ceramides to its N-terminus stabilizes a conformation that block SPT substrate entry, hence preventing SPT catalytic activity. Through this mechanism, maintains ceramide levels at sufficient concentrations for the production of complex sphingolipids, but which prevents the accumulation of ceramides to levels that trigger apoptosis. The polypeptide is ORM1-like protein 2 (ORMDL2) (Homo sapiens (Human)).